A 582-amino-acid polypeptide reads, in one-letter code: Actin-histidine N-methyltransferase (582 aa).

S-adenosyl-L-methionine is bound by residues R75, 104-106 (EGF), R254, 275-279 (DMCNH), and 325-327 (NGF). One can recognise an SET domain in the interval 94–314 (DGFELVEFPE…SGEQIYIFYG (221 aa)). The disordered stretch occupies residues 550–582 (DKDLLPNGTKSENDSFLAEDNQQETGNAKDFCS).

Belongs to the class V-like SAM-binding methyltransferase superfamily. SETD3 actin-histidine methyltransferase family.

Its subcellular location is the cytoplasm. The enzyme catalyses L-histidyl-[protein] + S-adenosyl-L-methionine = N(tele)-methyl-L-histidyl-[protein] + S-adenosyl-L-homocysteine + H(+). Functionally, protein-histidine N-methyltransferase that specifically mediates 3-methylhistidine (tele-methylhistidine) methylation of actin at 'His-73'. Does not have protein-lysine N-methyltransferase activity and probably only catalyzes histidine methylation of actin. The chain is Actin-histidine N-methyltransferase from Xenopus tropicalis (Western clawed frog).